We begin with the raw amino-acid sequence, 220 residues long: N-(5'-phosphoribosyl)anthranilate isomerase (220 aa).

It belongs to the TrpF family.

It catalyses the reaction N-(5-phospho-beta-D-ribosyl)anthranilate = 1-(2-carboxyphenylamino)-1-deoxy-D-ribulose 5-phosphate. The protein operates within amino-acid biosynthesis; L-tryptophan biosynthesis; L-tryptophan from chorismate: step 3/5. The sequence is that of N-(5'-phosphoribosyl)anthranilate isomerase from Xylella fastidiosa (strain M23).